Here is a 481-residue protein sequence, read N- to C-terminus: Aspartyl/glutamyl-tRNA(Asn/Gln) amidotransferase subunit B (481 aa).

The protein belongs to the GatB/GatE family. GatB subfamily. In terms of assembly, heterotrimer of A, B and C subunits.

It carries out the reaction L-glutamyl-tRNA(Gln) + L-glutamine + ATP + H2O = L-glutaminyl-tRNA(Gln) + L-glutamate + ADP + phosphate + H(+). The catalysed reaction is L-aspartyl-tRNA(Asn) + L-glutamine + ATP + H2O = L-asparaginyl-tRNA(Asn) + L-glutamate + ADP + phosphate + 2 H(+). Functionally, allows the formation of correctly charged Asn-tRNA(Asn) or Gln-tRNA(Gln) through the transamidation of misacylated Asp-tRNA(Asn) or Glu-tRNA(Gln) in organisms which lack either or both of asparaginyl-tRNA or glutaminyl-tRNA synthetases. The reaction takes place in the presence of glutamine and ATP through an activated phospho-Asp-tRNA(Asn) or phospho-Glu-tRNA(Gln). This chain is Aspartyl/glutamyl-tRNA(Asn/Gln) amidotransferase subunit B, found in Pseudomonas entomophila (strain L48).